We begin with the raw amino-acid sequence, 474 residues long: Glutamate--tRNA ligase (474 aa).

The 'HIGH' region signature appears at 11–21 (PSPTGFLHIGG). The 'KMSKS' region motif lies at 240-244 (KLSKR). Lys-243 contacts ATP.

It belongs to the class-I aminoacyl-tRNA synthetase family. Glutamate--tRNA ligase type 1 subfamily. As to quaternary structure, monomer.

The protein localises to the cytoplasm. It catalyses the reaction tRNA(Glu) + L-glutamate + ATP = L-glutamyl-tRNA(Glu) + AMP + diphosphate. Functionally, catalyzes the attachment of glutamate to tRNA(Glu) in a two-step reaction: glutamate is first activated by ATP to form Glu-AMP and then transferred to the acceptor end of tRNA(Glu). This is Glutamate--tRNA ligase from Nitrobacter winogradskyi (strain ATCC 25391 / DSM 10237 / CIP 104748 / NCIMB 11846 / Nb-255).